Consider the following 252-residue polypeptide: Accessory gland protein Acp32CD (252 aa).

The signal sequence occupies residues Met1–Gly19. The tract at residues Pro42–Met252 is disordered. Over residues Gly44 to Gly69 the composition is skewed to gly residues. 4 stretches are compositionally biased toward basic and acidic residues: residues Ala104–Asp122, Ser142–Lys153, Gln159–Ser171, and Asn209–Ala225.

In terms of tissue distribution, seminal fluid.

Its subcellular location is the secreted. Responsible for physiological and behavioral changes in mated female flies. The protein is Accessory gland protein Acp32CD (Acp32CD) of Drosophila melanogaster (Fruit fly).